Reading from the N-terminus, the 336-residue chain is Uridine nucleosidase 1 (336 aa).

Residues aspartate 29 and histidine 260 contribute to the active site.

It belongs to the IUNH family. As to quaternary structure, homodimer. Component of the NSH heterocomplex made of URH1/NSH1 and URH2/NSH2 which exhibits strong xanthosine nucleosidase activity. Interacts with URH2. As to expression, expressed ubiquitously in leaves, flowers, stems, pollen cells, root tip meristem and root vasculature.

It localises to the cytoplasm. The catalysed reaction is uridine + H2O = D-ribose + uracil. It catalyses the reaction xanthosine + H2O = D-ribose + xanthine. The enzyme catalyses inosine + H2O = hypoxanthine + D-ribose. It carries out the reaction adenosine + H2O = D-ribose + adenine. Functionally, involved in purine and pyrimidine breakdown rather than in pyrimidine salvage, especially in response to dark stress. Together with URH2, required for efficient inosine and xanthosine hydrolytic activities. Unable to use cytidine as a substrate. Can use uridine, inosine, adenosine as well as the cytokinin derivative isopentenyladenine-riboside as substrates. Also hydrolyzes xanthosine with high efficiency. This is Uridine nucleosidase 1 from Arabidopsis thaliana (Mouse-ear cress).